Reading from the N-terminus, the 1006-residue chain is Unconventional myosin-Id (1006 aa).

A2 is modified (N-acetylalanine). The Myosin motor domain maps to 9–695 (FGKADFVLMD…TLFTLEELRA (687 aa)). 102–109 (GESGAGKT) contributes to the ATP binding site. The residue at position 200 (S200) is a Phosphoserine. At Y536 the chain carries Phosphotyrosine. Positions 572 to 594 (MIALVDNLASKEPYYVRCIKPND) are actin-binding. 2 consecutive IQ domains span residues 699 to 719 (VRVV…MRYK) and 721 to 741 (TKAA…SYIH). The tract at residues 776–896 (LQSIFNRWRA…MDPTKQYKVM (121 aa)) is interaction with calmodulin. One can recognise a TH1 domain in the interval 812-1005 (GQRADLGLQR…RSGFILSVPG (194 aa)).

The protein belongs to the TRAFAC class myosin-kinesin ATPase superfamily. Myosin family. As to quaternary structure, interacts (via the two IQ motifs) with calmodulin. Binds an additional calmodulin chain via a third, C-terminal region. Interacts with F-actin. Detected on tracheal epithelial cells, and on epithelial cells and brush border cells in duodenum, jejunum and ileum. Detected on myelinated white matter in the cerebellum, and the myelinated part of the optic nerve. Detected on mature oligodendrocites. Detected on the outside of the myelin sheet that surrounds axons (at protein level). Ubiquitous. Highest levels in adult brain, and spinal cord. Moderate levels in lung, kidney, liver and spleen. Low levels in testis and heart (at protein level).

Its subcellular location is the cytoplasm. The protein resides in the perikaryon. It is found in the cell projection. The protein localises to the dendrite. It localises to the early endosome. Its subcellular location is the cell cortex. Functionally, unconventional myosin that functions as actin-based motor protein with ATPase activity. Plays a role in endosomal protein trafficking, and especially in the transfer of cargo proteins from early to recycling endosomes. Required for normal planar cell polarity in ciliated tracheal cells, for normal rotational polarity of cilia, and for coordinated, unidirectional ciliary movement in the trachea. Required for normal, polarized cilia organization in brain ependymal epithelial cells. The chain is Unconventional myosin-Id (Myo1d) from Rattus norvegicus (Rat).